The sequence spans 2285 residues: Protein Ycf2 (2285 aa).

1638-1645 (GSIGTGRS) contacts ATP.

This sequence belongs to the Ycf2 family.

It is found in the plastid. The protein localises to the chloroplast stroma. In terms of biological role, probable ATPase of unknown function. Its presence in a non-photosynthetic plant (Epifagus virginiana) and experiments in tobacco indicate that it has an essential function which is probably not related to photosynthesis. The sequence is that of Protein Ycf2 from Populus trichocarpa (Western balsam poplar).